The primary structure comprises 81 residues: uncharacterized protein (81 aa).

A disordered region spans residues 11–34; it reads GSVSSSNKVSVANGSSSSSFGSNG.

This is an uncharacterized protein from Dictyostelium discoideum (Social amoeba).